We begin with the raw amino-acid sequence, 474 residues long: Cytochrome c-552 (474 aa).

A signal peptide spans 1–29 (MSIKHWMASSVSVTALVMTALLNITAVSA). His-91 serves as a coordination point for heme c. 3 residues coordinate heme: Cys-119, Cys-122, and Lys-123. 6 residues coordinate heme c: Cys-157, Cys-160, His-161, Cys-206, Cys-209, and His-210. Positions 212, 213, 258, and 260 each coordinate Ca(2+). Tyr-213 serves as a coordination point for substrate. A substrate-binding site is contributed by His-261. The heme c site is built by His-272, Cys-279, Cys-282, His-283, His-298, Cys-311, Cys-314, His-315, and His-390.

Belongs to the cytochrome c-552 family. Ca(2+) is required as a cofactor. The cofactor is heme c.

The protein resides in the periplasm. The catalysed reaction is 6 Fe(III)-[cytochrome c] + NH4(+) + 2 H2O = 6 Fe(II)-[cytochrome c] + nitrite + 8 H(+). It participates in nitrogen metabolism; nitrate reduction (assimilation). Functionally, catalyzes the reduction of nitrite to ammonia, consuming six electrons in the process. The sequence is that of Cytochrome c-552 from Vibrio vulnificus (strain CMCP6).